Here is a 329-residue protein sequence, read N- to C-terminus: Ribosomal RNA small subunit methyltransferase C (329 aa).

Belongs to the methyltransferase superfamily. RsmC family. As to quaternary structure, monomer.

The protein localises to the cytoplasm. The catalysed reaction is guanosine(1207) in 16S rRNA + S-adenosyl-L-methionine = N(2)-methylguanosine(1207) in 16S rRNA + S-adenosyl-L-homocysteine + H(+). Functionally, specifically methylates the guanine in position 1207 of 16S rRNA in the 30S particle. The sequence is that of Ribosomal RNA small subunit methyltransferase C from Actinobacillus pleuropneumoniae serotype 3 (strain JL03).